A 561-amino-acid polypeptide reads, in one-letter code: Formate--tetrahydrofolate ligase (561 aa).

66 to 73 (TPAGEGKT) serves as a coordination point for ATP.

This sequence belongs to the formate--tetrahydrofolate ligase family.

The catalysed reaction is (6S)-5,6,7,8-tetrahydrofolate + formate + ATP = (6R)-10-formyltetrahydrofolate + ADP + phosphate. It functions in the pathway one-carbon metabolism; tetrahydrofolate interconversion. The chain is Formate--tetrahydrofolate ligase from Methylibium petroleiphilum (strain ATCC BAA-1232 / LMG 22953 / PM1).